The sequence spans 243 residues: PHO85 cyclin-like protein psl1 (243 aa).

The segment covering 211-224 has biased composition (polar residues); it reads ESPISHTPQQNQQD. The tract at residues 211 to 231 is disordered; it reads ESPISHTPQQNQQDEQPRRPI.

This sequence belongs to the cyclin family. PHO80 subfamily. As to quaternary structure, forms a cyclin-CDK complex with pef1.

The protein resides in the cytoplasm. It is found in the nucleus. Functionally, cyclin partner of the cyclin-dependent kinase (CDK) pef1 (PHO85 homolog). The polypeptide is PHO85 cyclin-like protein psl1 (psl1) (Schizosaccharomyces pombe (strain 972 / ATCC 24843) (Fission yeast)).